The following is a 307-amino-acid chain: UDP-3-O-acyl-N-acetylglucosamine deacetylase (307 aa).

Zn(2+) is bound by residues His80, His239, and Asp243. His266 acts as the Proton donor in catalysis.

The protein belongs to the LpxC family. The cofactor is Zn(2+).

It catalyses the reaction a UDP-3-O-[(3R)-3-hydroxyacyl]-N-acetyl-alpha-D-glucosamine + H2O = a UDP-3-O-[(3R)-3-hydroxyacyl]-alpha-D-glucosamine + acetate. It participates in glycolipid biosynthesis; lipid IV(A) biosynthesis; lipid IV(A) from (3R)-3-hydroxytetradecanoyl-[acyl-carrier-protein] and UDP-N-acetyl-alpha-D-glucosamine: step 2/6. Functionally, catalyzes the hydrolysis of UDP-3-O-myristoyl-N-acetylglucosamine to form UDP-3-O-myristoylglucosamine and acetate, the committed step in lipid A biosynthesis. The polypeptide is UDP-3-O-acyl-N-acetylglucosamine deacetylase (Neisseria meningitidis serogroup C (strain 053442)).